A 508-amino-acid chain; its full sequence is Protein NODULATION SIGNALING PATHWAY 2 (508 aa).

Residues 75 to 98 (ITTTTTTTTTTDEEEEEMETTTTT) are disordered. The GRAS domain occupies 108–500 (VGDDSKGLKL…RRLLSASLWT (393 aa)). The interval 115-190 (LKLVHLLMAG…NNHHHHNNNK (76 aa)) is leucine repeat I (LRI). A VHIID region spans residues 209–273 (FQLLQDMSPY…NNGPHLRITA (65 aa)). Residues 240-244 (VHVID) carry the VHIID motif. Residues 289–321 (ETGRRLTSFAASLGQPFSFHHCRLDSDETFRPS) form a leucine repeat II (LRII) region. Residues 331-422 (LVFNCMLNLP…RVFFGPRIAG (92 aa)) are PFYRE. The interval 425–500 (GRIYRTGGEE…RRLLSASLWT (76 aa)) is SAW.

It belongs to the GRAS family. In terms of assembly, interacts with RAM1. Interacts with IPN2 and RAD1. In terms of tissue distribution, expressed in roots, shoots and leaves.

Its subcellular location is the nucleus membrane. The protein localises to the endoplasmic reticulum. Functionally, transcriptional regulator essential for Nod-factor-induced gene expression. Acts downstream of calcium spiking and DMI3, a calcium/calmodulin-dependent protein kinase (CCaMK). Transcription factor involved in the control of strigolactone biosynthesis in roots through the activation of the beta-carotene isomerase D27, which participates in a pathway leading to biosynthesis of strigolactones. The polypeptide is Protein NODULATION SIGNALING PATHWAY 2 (Medicago truncatula (Barrel medic)).